The following is a 434-amino-acid chain: Histidinol dehydrogenase (434 aa).

Tyrosine 130, glutamine 188, and asparagine 211 together coordinate NAD(+). The substrate site is built by serine 237, glutamine 259, and histidine 262. Residues glutamine 259 and histidine 262 each contribute to the Zn(2+) site. Catalysis depends on proton acceptor residues glutamate 326 and histidine 327. Residues histidine 327, aspartate 360, glutamate 414, and histidine 419 each contribute to the substrate site. Aspartate 360 serves as a coordination point for Zn(2+). Histidine 419 lines the Zn(2+) pocket.

Belongs to the histidinol dehydrogenase family. Homodimer. Zn(2+) serves as cofactor.

The enzyme catalyses L-histidinol + 2 NAD(+) + H2O = L-histidine + 2 NADH + 3 H(+). Its pathway is amino-acid biosynthesis; L-histidine biosynthesis; L-histidine from 5-phospho-alpha-D-ribose 1-diphosphate: step 9/9. Its function is as follows. Catalyzes the sequential NAD-dependent oxidations of L-histidinol to L-histidinaldehyde and then to L-histidine. The chain is Histidinol dehydrogenase from Shigella dysenteriae serotype 1 (strain Sd197).